The primary structure comprises 229 residues: Urease accessory protein UreF (229 aa).

This sequence belongs to the UreF family. As to quaternary structure, ureD, UreF and UreG form a complex that acts as a GTP-hydrolysis-dependent molecular chaperone, activating the urease apoprotein by helping to assemble the nickel containing metallocenter of UreC. The UreE protein probably delivers the nickel.

It localises to the cytoplasm. Its function is as follows. Required for maturation of urease via the functional incorporation of the urease nickel metallocenter. The protein is Urease accessory protein UreF of Methylobacterium radiotolerans (strain ATCC 27329 / DSM 1819 / JCM 2831 / NBRC 15690 / NCIMB 10815 / 0-1).